A 54-amino-acid polypeptide reads, in one-letter code: Large ribosomal subunit protein bL33A (54 aa).

It belongs to the bacterial ribosomal protein bL33 family.

This is Large ribosomal subunit protein bL33A from Mycolicibacterium paratuberculosis (strain ATCC BAA-968 / K-10) (Mycobacterium paratuberculosis).